The chain runs to 313 residues: Protoheme IX farnesyltransferase (313 aa).

9 helical membrane-spanning segments follow: residues 29-49 (VISL…RGWP), 57-77 (LWLL…AGVF), 101-123 (LISS…VMLW), 124-144 (VWGT…YVVI), 157-177 (IVIG…AVTG), 185-205 (YLFA…ALMI), 225-245 (MTVA…LMPV), 247-267 (FGAV…WLLW), and 287-307 (AVPL…AGAI).

The protein belongs to the UbiA prenyltransferase family. Protoheme IX farnesyltransferase subfamily.

It is found in the cell membrane. The enzyme catalyses heme b + (2E,6E)-farnesyl diphosphate + H2O = Fe(II)-heme o + diphosphate. The protein operates within porphyrin-containing compound metabolism; heme O biosynthesis; heme O from protoheme: step 1/1. Converts heme B (protoheme IX) to heme O by substitution of the vinyl group on carbon 2 of heme B porphyrin ring with a hydroxyethyl farnesyl side group. This Deinococcus radiodurans (strain ATCC 13939 / DSM 20539 / JCM 16871 / CCUG 27074 / LMG 4051 / NBRC 15346 / NCIMB 9279 / VKM B-1422 / R1) protein is Protoheme IX farnesyltransferase.